The chain runs to 351 residues: Peptide chain release factor 1 (351 aa).

The residue at position 229 (Gln-229) is an N5-methylglutamine. Positions 279 to 300 (ADAERAADRKSQVGSGDRSERI) are disordered.

This sequence belongs to the prokaryotic/mitochondrial release factor family. In terms of processing, methylated by PrmC. Methylation increases the termination efficiency of RF1.

Its subcellular location is the cytoplasm. Its function is as follows. Peptide chain release factor 1 directs the termination of translation in response to the peptide chain termination codons UAG and UAA. The protein is Peptide chain release factor 1 of Paracoccus denitrificans (strain Pd 1222).